A 440-amino-acid chain; its full sequence is Putative short-chain fatty acid transporter (440 aa).

The Periplasmic segment spans residues 1–19; the sequence is MIGRISRFMTRFVSRWLPD. The chain crosses the membrane as a helical span at residues 20-40; it reads PLIFAMLLTLLTFVIALWLTP. Residues 41-53 lie on the Cytoplasmic side of the membrane; that stretch reads QTPISMVKMWGDG. Residues 54 to 74 form a helical membrane-spanning segment; sequence FWNLLAFGMQMALIIVTGHAL. Topologically, residues 75 to 102 are periplasmic; that stretch reads ASSAPVKSLLRTAASAAKTPVQGVMLVT. The helical transmembrane segment at 103–123 threads the bilayer; that stretch reads FFGSVACVINWGFGLVVGAMF. At 124–137 the chain is on the cytoplasmic side; the sequence is AREVARRVPGSDYP. 2 helical membrane-spanning segments follow: residues 138-158 and 159-179; these read LLIA…SGSM and PLLA…IPVG. Residue aspartate 180 is a topological domain, cytoplasmic. Residues 181–201 form a helical membrane-spanning segment; it reads TLFSGFNIFITVALIVVMPFI. Residues 202 to 244 are Periplasmic-facing; the sequence is TRMMMPKPSDVVSIDPKLLMEEADFQKQLPKDAPPSERLEESR. 2 helical membrane-spanning segments follow: residues 245 to 265 and 266 to 286; these read ILTL…FSEH and GFNI…LLLH. The Periplasmic segment spans residues 287–313; it reads KTPMAYMRAISAAARSTAGILVQFPFY. Residues 314–334 form a helical membrane-spanning segment; the sequence is AGIQLMMEHSGLGGLITEFFI. At 335 to 351 the chain is on the cytoplasmic side; the sequence is NVANKDTFPVMTFFSSA. Residues 352-372 traverse the membrane as a helical segment; it reads LINFAVPSGGGHWVIQGPFVI. Topologically, residues 373–394 are periplasmic; sequence PAAQALGADLGKSVMAIAYGEQ. The helical transmembrane segment at 395–415 threads the bilayer; that stretch reads WMNMAQPFWALPALAIAGLGV. Topologically, residues 416-419 are cytoplasmic; sequence RDIM. A helical transmembrane segment spans residues 420–440; that stretch reads GYCITALLFSGVIFVIGLTLF.

The protein resides in the cell inner membrane. Functionally, may be responsible for the uptake of short-chain fatty acids. The protein is Putative short-chain fatty acid transporter (atoE) of Escherichia coli (strain K12).